We begin with the raw amino-acid sequence, 170 residues long: CASP-like protein 1F1 (170 aa).

At 1–16 (MMGDNEGRRTPLLNLG) the chain is on the cytoplasmic side. The chain crosses the membrane as a helical span at residues 17–37 (VQVSMRVLTIGAAMASMWVMI). Topologically, residues 38–62 (TNREVASVYGIAFEAKYSYSSAFRY) are extracellular. A helical transmembrane segment spans residues 63–83 (LVYAQIAVCAATLFTLVWACL). Over 84 to 88 (AVRRR) the chain is Cytoplasmic. A helical membrane pass occupies residues 89-109 (GLVFALFFFDLLTTLTAISAF). Residues 110 to 141 (SAAFAEGYVGKYGNKQAGWLPICGYVHGYCSR) lie on the Extracellular side of the membrane. Residues 142 to 162 (VTISLAMSFASFILLFILTVL) form a helical membrane-spanning segment. Over 163-170 (TASAARHY) the chain is Cytoplasmic.

It belongs to the Casparian strip membrane proteins (CASP) family. Homodimer and heterodimers. In flowers, expressed in the anther wall.

Its subcellular location is the cell membrane. The chain is CASP-like protein 1F1 from Arabidopsis thaliana (Mouse-ear cress).